The following is a 501-amino-acid chain: Cytochrome P450 monooxygeanse terP (501 aa).

A helical membrane pass occupies residues 2 to 22 (PSLLLSLLLLQVPIICAWLLV). Cys-441 contacts heme.

Belongs to the cytochrome P450 family. Heme serves as cofactor.

The protein localises to the membrane. It participates in secondary metabolite biosynthesis. Cytochrome P450 monooxygeanse; part of the gene cluster that mediates the biosynthesis of terpendoles, indole-diterpene (IDT) mycotoxins including terpendole I, terpendole K, terpendole C, as well as the kinesin Eg5 inhibitor terpendole E. TerP has dual activity and is able to convert terpendole E to 13-desoxyterpendole I and paspaline to 13-desoxypaxilline. Terpendoles biosynthesis begins with the synthesis of geranylgeranyl diphosphate (GGPP) by a yet unidentified GGPP synthase. Condensation of indole-3-glycerol phosphate with GGPP by the prenyltransferase terC then forms 3-geranylgeranylindole (3-GGI), followed by epoxidation and cyclization of this intermediate (by the FAD-dependent monooxygeanse terM and the terpene cyclase terB) to form paspaline. The cytochrome monooxygenase terQ then hydroxylates paspalline at C-11 to yield terpendole E. The cytochrome monooxygenase terP converts terpendole E to 13-desoxyterpendole I, and terQ converts 13-desoxyterpendole I into terpendole I. TerF and terK are required for conversion of terpendole I to terpendole C which is further converted to terpendole K. This Tolypocladium album (Soil fungus) protein is Cytochrome P450 monooxygeanse terP.